The chain runs to 197 residues: dITP/XTP pyrophosphatase (197 aa).

A substrate-binding site is contributed by 8 to 13 (TGNPGK). Mg(2+) contacts are provided by Glu-40 and Asp-69. Catalysis depends on Asp-69, which acts as the Proton acceptor. Substrate is bound by residues Ser-70, 154-157 (FGYD), Lys-177, and 182-183 (HR).

It belongs to the HAM1 NTPase family. As to quaternary structure, homodimer. It depends on Mg(2+) as a cofactor.

The catalysed reaction is XTP + H2O = XMP + diphosphate + H(+). The enzyme catalyses dITP + H2O = dIMP + diphosphate + H(+). It catalyses the reaction ITP + H2O = IMP + diphosphate + H(+). Functionally, pyrophosphatase that catalyzes the hydrolysis of nucleoside triphosphates to their monophosphate derivatives, with a high preference for the non-canonical purine nucleotides XTP (xanthosine triphosphate), dITP (deoxyinosine triphosphate) and ITP. Seems to function as a house-cleaning enzyme that removes non-canonical purine nucleotides from the nucleotide pool, thus preventing their incorporation into DNA/RNA and avoiding chromosomal lesions. This is dITP/XTP pyrophosphatase from Pectobacterium atrosepticum (strain SCRI 1043 / ATCC BAA-672) (Erwinia carotovora subsp. atroseptica).